Consider the following 470-residue polypeptide: Aminodeoxychorismate synthase component 1 (470 aa).

It belongs to the anthranilate synthase component I family. As to quaternary structure, monomer. Heterodimer consisting of two non-identical subunits: a glutamine amidotransferase subunit (PabA) and a aminodeoxychorismate synthase subunit (PabB). It depends on Mg(2+) as a cofactor.

The catalysed reaction is chorismate + L-glutamine = 4-amino-4-deoxychorismate + L-glutamate. Its pathway is cofactor biosynthesis; tetrahydrofolate biosynthesis; 4-aminobenzoate from chorismate: step 1/2. Functionally, part of a heterodimeric complex that catalyzes the two-step biosynthesis of 4-amino-4-deoxychorismate (ADC), a precursor of p-aminobenzoate (PABA) and tetrahydrofolate. In the first step, a glutamine amidotransferase (PabA) generates ammonia as a substrate that, along with chorismate, is used in the second step, catalyzed by aminodeoxychorismate synthase (PabB) to produce ADC. The polypeptide is Aminodeoxychorismate synthase component 1 (pabB) (Bacillus subtilis (strain 168)).